The following is an 863-amino-acid chain: DNA replication licensing factor mcm4 (863 aa).

Positions 1–121 (MSSPTSTPSR…ARQRPDLGSA (121 aa)) are disordered. Composition is skewed to polar residues over residues 54–64 (SPSGDLQSPSG) and 78–99 (SALQ…SSRV). The C4-type zinc finger occupies 306–331 (CQVCAFTTRVEIDRGRISEPSVCKHC). The 210-residue stretch at 458-667 (IYERLASALA…YDRRLAHHLV (210 aa)) folds into the MCM domain. Residues tyrosine 471, arginine 497, lysine 516, serine 517, asparagine 618, arginine 643, arginine 732, and glutamate 735 each contribute to the ATP site. Residues 642 to 645 (SRFD) carry the Arginine finger motif.

Belongs to the MCM family. Component of the mcm2-7 complex (RLF-M). The complex forms a toroidal hexameric ring with the proposed subunit order mcm2-mcm6-mcm4-mcm7-mcm3-mcm5. The heterodimer of mmcm3/mcm5 interacts with mcm4, mmcm6, mcm7 and weakly with mcm2. Component of the CMG helicase complex, composed of the mcm2-7 complex, the GINS complex and cdc45. Hyperphosphorylated during mitosis in a mechanism requiring cdc2-cyclin B and other kinases. Undergoes dephosphorylation after exiting mitosis, existing in a partially phosphorylated state in the cytosolic interphase mcm complex which associates with the pre-replication complexes (pre-Rcs). Complete dephosphorylation inactivates the mcm complex, preventing its binding to chromatin. Becomes actively phosphorylated during S phase once the mcm complex is assembled on the chromatin. This chromatin-associated phosphorylation occurs during the activation of the pre-Rcs and is independent of cdks. Phosphorylated by the cdc7-dbf4b complex.

The protein resides in the nucleus. Its subcellular location is the chromosome. It catalyses the reaction ATP + H2O = ADP + phosphate + H(+). Acts as a component of the MCM2-7 complex (MCM complex) which is the replicative helicase essential for 'once per cell cycle' DNA replication initiation and elongation in eukaryotic cells. Core component of CDC45-MCM-GINS (CMG) helicase, the molecular machine that unwinds template DNA during replication, and around which the replisome is built. The active ATPase sites in the MCM2-7 ring are formed through the interaction surfaces of two neighboring subunits such that a critical structure of a conserved arginine finger motif is provided in trans relative to the ATP-binding site of the Walker A box of the adjacent subunit. The six ATPase active sites, however, are likely to contribute differentially to the complex helicase activity. The chain is DNA replication licensing factor mcm4 from Xenopus tropicalis (Western clawed frog).